A 301-amino-acid polypeptide reads, in one-letter code: Acetyl-coenzyme A carboxylase carboxyl transferase subunit beta (301 aa).

The CoA carboxyltransferase N-terminal domain occupies 25 to 294 (LWIKDPSTGE…NSDAPEHEKT (270 aa)). The disordered stretch occupies residues 282 to 301 (QPGNSDAPEHEKTEATDKAA). Positions 288–301 (APEHEKTEATDKAA) are enriched in basic and acidic residues.

It belongs to the AccD/PCCB family. As to quaternary structure, acetyl-CoA carboxylase is a heterohexamer composed of biotin carboxyl carrier protein (AccB), biotin carboxylase (AccC) and two subunits each of ACCase subunit alpha (AccA) and ACCase subunit beta (AccD).

Its subcellular location is the cytoplasm. It catalyses the reaction N(6)-carboxybiotinyl-L-lysyl-[protein] + acetyl-CoA = N(6)-biotinyl-L-lysyl-[protein] + malonyl-CoA. It participates in lipid metabolism; malonyl-CoA biosynthesis; malonyl-CoA from acetyl-CoA: step 1/1. In terms of biological role, component of the acetyl coenzyme A carboxylase (ACC) complex. Biotin carboxylase (BC) catalyzes the carboxylation of biotin on its carrier protein (BCCP) and then the CO(2) group is transferred by the transcarboxylase to acetyl-CoA to form malonyl-CoA. The sequence is that of Acetyl-coenzyme A carboxylase carboxyl transferase subunit beta from Brucella anthropi (strain ATCC 49188 / DSM 6882 / CCUG 24695 / JCM 21032 / LMG 3331 / NBRC 15819 / NCTC 12168 / Alc 37) (Ochrobactrum anthropi).